Consider the following 501-residue polypeptide: MSSPAQPAVPAPLADLKIQHTKIFINNEWHNSVSGKKFPVLNPATEEVICHVEEGDKADVDKAVKAARQAFQIGSPWRTMDASERGRLLNKLADLMERDRLLLATMEALNGGKVFANAYLSDLGGCIKALKYCAGWADKIHGQTIPSDGDIFTYTRREPIGVCGQIIPWNFPMLMFIWKIGPALSCGNTVVVKPAEQTPLTALHLASLIKEAGFPPGVVNIVPGYGPTAGAAISSHMDVDKVAFTGSTQVGKLIKEAAGKSNLKRVTLELGGKSPCIVFADADLDIAVEFAHHGVFYHQGQCCVAASRIFVEESVYDEFVKRSVERAKKYVLGNPLTPGINQGPQIDKEQHDKILDLIESGKKEGAKLECGGGRWGNKGFFVQPTVFSNVTDEMRIAKEEIFGPVQQIMKFKSVDDVIKRANNTTYGLAAGLFTKDLDKAITVSSALQAGVVWVNCYMMLSAQCPFGGFKMSGNGRELGEHGLYEYTELKTVAMKISQKNS.

An N-acetylserine modification is found at Ser-2. N6-acetyllysine occurs at positions 91 and 128. NAD(+)-binding positions include Ile-167–Asn-170, Lys-193–Glu-196, Gly-226–Pro-227, and Gly-246–Ser-247. Lys-252 carries the N6-acetyllysine modification. The active-site Proton acceptor is Glu-269. Glu-269–Gly-271 contacts NAD(+). Cys-303 acts as the Nucleophile in catalysis. Positions Leu-336–Ser-501 are mediates interaction with PRMT3. Residue Thr-337 is modified to Phosphothreonine. An NAD(+)-binding site is contributed by Glu-349–Lys-353. 2 positions are modified to N6-acetyllysine: Lys-353 and Lys-367. Glu-400–Phe-402 contacts NAD(+). N6-acetyllysine is present on Lys-410. Phosphoserine is present on Ser-413. 3 positions are modified to N6-acetyllysine: Lys-419, Lys-435, and Lys-495.

It belongs to the aldehyde dehydrogenase family. In terms of assembly, homotetramer. Interacts with PRMT3; the interaction is direct, inhibits ALDH1A1 aldehyde dehydrogenase activity and is independent of the methyltransferase activity of PRMT3. The N-terminus is blocked most probably by acetylation. Expressed in retina. Expressed in lens and cornea (at protein level). Expressed by midbrain dopamine neurons.

It localises to the cytoplasm. Its subcellular location is the cytosol. The protein localises to the cell projection. It is found in the axon. It catalyses the reaction an aldehyde + NAD(+) + H2O = a carboxylate + NADH + 2 H(+). The enzyme catalyses all-trans-retinal + NAD(+) + H2O = all-trans-retinoate + NADH + 2 H(+). The catalysed reaction is 9-cis-retinal + NAD(+) + H2O = 9-cis-retinoate + NADH + 2 H(+). It carries out the reaction 11-cis-retinal + NAD(+) + H2O = 11-cis-retinoate + NADH + 2 H(+). It catalyses the reaction 13-cis-retinal + NAD(+) + H2O = 13-cis-retinoate + NADH + 2 H(+). The enzyme catalyses 4-aminobutanal + NAD(+) + H2O = 4-aminobutanoate + NADH + 2 H(+). The catalysed reaction is 3-deoxyglucosone + NAD(+) + H2O = 2-dehydro-3-deoxy-D-gluconate + NADH + 2 H(+). It carries out the reaction (E)-4-hydroxynon-2-enal + NAD(+) + H2O = (E)-4-hydroxynon-2-enoate + NADH + 2 H(+). It catalyses the reaction malonaldehyde + NAD(+) + H2O = 3-oxopropanoate + NADH + 2 H(+). The enzyme catalyses hexanal + NAD(+) + H2O = hexanoate + NADH + 2 H(+). The catalysed reaction is propanal + NAD(+) + H2O = propanoate + NADH + 2 H(+). It carries out the reaction acetaldehyde + NAD(+) + H2O = acetate + NADH + 2 H(+). It catalyses the reaction benzaldehyde + NAD(+) + H2O = benzoate + NADH + 2 H(+). Its pathway is cofactor metabolism; retinol metabolism. With respect to regulation, the aminobutyraldehyde dehydrogenase activity is negatively regulated by ethanol in vivo. Cytosolic dehydrogenase that catalyzes the irreversible oxidation of a wide range of aldehydes to their corresponding carboxylic acid. Functions downstream of retinol dehydrogenases and catalyzes the oxidation of retinaldehyde into retinoic acid, the second step in the oxidation of retinol/vitamin A into retinoic acid. This pathway is crucial to control the levels of retinol and retinoic acid, two important molecules which excess can be teratogenic and cytotoxic. Also oxidizes aldehydes resulting from lipid peroxidation like (E)-4-hydroxynon-2-enal/HNE, malonaldehyde and hexanal that form protein adducts and are highly cytotoxic. By participating for instance to the clearance of (E)-4-hydroxynon-2-enal/HNE in the lens epithelium prevents the formation of HNE-protein adducts and lens opacification. Also functions downstream of fructosamine-3-kinase in the fructosamine degradation pathway by catalyzing the oxidation of 3-deoxyglucosone, the carbohydrate product of fructosamine 3-phosphate decomposition, which is itself a potent glycating agent that may react with lysine and arginine side-chains of proteins. Also has an aminobutyraldehyde dehydrogenase activity and is probably part of an alternative pathway for the biosynthesis of GABA/4-aminobutanoate in midbrain, thereby playing a role in GABAergic synaptic transmission. The protein is Aldehyde dehydrogenase 1A1 of Mus musculus (Mouse).